The following is a 69-amino-acid chain: Disintegrin EC6 subunit beta (69 aa).

Positions asparagine 1–lysine 65 constitute a Disintegrin domain. Disulfide bonds link cysteine 6-cysteine 29, cysteine 20-cysteine 26, cysteine 25-cysteine 50, and cysteine 38-cysteine 57. The Cell attachment site motif lies at arginine 42–aspartate 44.

It belongs to the venom metalloproteinase (M12B) family. P-II subfamily. P-IIe sub-subfamily. In terms of assembly, heterodimer with subunit alpha; disulfide-linked. In terms of tissue distribution, expressed by the venom gland.

It localises to the secreted. Its function is as follows. Potently inhibits adhesion of alpha-4/beta-1 (ITGA4/ITGB1) and alpha-9/beta-1 (ITGA9/ITGB1) integrins to VCAM1, and adhesion of alpha-5/beta-1 (ITGA5/ITGB1) integrin to fibronectin. Has a much less effect on alpha-IIb/beta-3 (ITGA2B/ITGB3) integrin. Also potently inhibits neutrophil migration across TNF-alpha-activated human umbilical endothelial cells. The protein is Disintegrin EC6 subunit beta of Echis carinatus sochureki (Saw-scaled viper).